The sequence spans 565 residues: NAD-dependent malic enzyme (565 aa).

Tyr104 acts as the Proton donor in catalysis. Arg157 contacts NAD(+). Residue Lys175 is the Proton acceptor of the active site. A divalent metal cation contacts are provided by Glu246, Asp247, and Asp270. Asp270 and Asn418 together coordinate NAD(+).

The protein belongs to the malic enzymes family. Homotetramer. It depends on Mg(2+) as a cofactor. Requires Mn(2+) as cofactor.

The catalysed reaction is (S)-malate + NAD(+) = pyruvate + CO2 + NADH. The enzyme catalyses oxaloacetate + H(+) = pyruvate + CO2. This is NAD-dependent malic enzyme from Escherichia coli O6:H1 (strain CFT073 / ATCC 700928 / UPEC).